The following is a 572-amino-acid chain: Glutamate--tRNA ligase (572 aa).

The 'HIGH' region signature appears at 107–117 (PNPDGAFHLGN).

This sequence belongs to the class-I aminoacyl-tRNA synthetase family. Glutamate--tRNA ligase type 2 subfamily.

Its subcellular location is the cytoplasm. The enzyme catalyses tRNA(Glu) + L-glutamate + ATP = L-glutamyl-tRNA(Glu) + AMP + diphosphate. In terms of biological role, catalyzes the attachment of glutamate to tRNA(Glu) in a two-step reaction: glutamate is first activated by ATP to form Glu-AMP and then transferred to the acceptor end of tRNA(Glu). In Pyrococcus furiosus (strain ATCC 43587 / DSM 3638 / JCM 8422 / Vc1), this protein is Glutamate--tRNA ligase.